Consider the following 113-residue polypeptide: Holo-[acyl-carrier-protein] synthase (113 aa).

Residues Asp-8 and Glu-57 each coordinate Mg(2+).

Belongs to the P-Pant transferase superfamily. AcpS family. The cofactor is Mg(2+).

The protein localises to the cytoplasm. It catalyses the reaction apo-[ACP] + CoA = holo-[ACP] + adenosine 3',5'-bisphosphate + H(+). In terms of biological role, transfers the 4'-phosphopantetheine moiety from coenzyme A to a Ser of acyl-carrier-protein. In Thermodesulfovibrio yellowstonii (strain ATCC 51303 / DSM 11347 / YP87), this protein is Holo-[acyl-carrier-protein] synthase.